The chain runs to 89 residues: Transcriptional regulator WhiB2 (89 aa).

Residues 1 to 15 (MVPEAPAPFEEPLPP) show a composition bias toward pro residues. The segment at 1–24 (MVPEAPAPFEEPLPPEATDQWQDR) is disordered. The region spanning 26 to 83 (LCAQTDPEAFFPEKGGSTREAKKICMGCEVRHECLEYALAHDERFGIWGGLSERERRR) is the 4Fe-4S Wbl-type domain. Cysteine 27 contributes to the [4Fe-4S] cluster binding site. Serine 42 bears the Phosphoserine mark. Residues cysteine 50, cysteine 53, and cysteine 59 each coordinate [4Fe-4S] cluster.

The protein belongs to the WhiB family. Requires [4Fe-4S] cluster as cofactor. In terms of processing, may be phosphorylated, possibly on Ser-42. The cluster is degraded quickly in the presence of air. Upon cluster removal intramolecular disulfide bonds are formed. Post-translationally, the Fe-S cluster can be nitrosylated by nitric oxide (NO).

It localises to the cytoplasm. Acts as a transcriptional regulator. Probably redox-responsive. The apo- but not holo-form probably binds DNA. Functionally, the apo-form functions as a chaperone, preventing aggregation or helping in correct refolding of a number of substrates; this activity does not require ATP or the ability to bind a Fe-S cluster. Chaperone activity is insensitive to the redox state of its cysteine residues. The apo-form has no protein disulfide reductase activity. The apo-form binds to its own promoter. The protein is Transcriptional regulator WhiB2 (whiB2) of Mycobacterium tuberculosis (strain ATCC 25618 / H37Rv).